Reading from the N-terminus, the 209-residue chain is Thymidylate kinase (209 aa).

11–18 (GPDGAGKT) contributes to the ATP binding site.

Belongs to the thymidylate kinase family.

It catalyses the reaction dTMP + ATP = dTDP + ADP. Its function is as follows. Phosphorylation of dTMP to form dTDP in both de novo and salvage pathways of dTTP synthesis. The sequence is that of Thymidylate kinase from Streptococcus thermophilus (strain ATCC BAA-250 / LMG 18311).